The primary structure comprises 635 residues: MQLLLIHSDYIEYETKKQTPVAEKIEESLKSGRLEEALTAFTAVESVDEANPEEAIEKAVSEIEKVAAQVKTNRIMLYPYAHLSSDLSSPKVAVQVLKGIEAALSGKYEVKRAPFGWYKAFTVSCKGHPLSELSRSIHPEGTAKAAVKPEAAGEKEEVVSEALKAEGTARSYWRILTPDGELHEVETFDLTPYPKLQQFVNYEISKSRAVERAPPHVELMRRLELADYEPGSDSGNMRYYPKGRLVKSLLENYVLDVATEFGAMEVETPLMYDMNHPTLKKYLDRFPARQYSIESDKRQMFLRFAACFGQFLMNHDMTISYKNLPLRMIEMTRYSFRKEQRGELVGLRRLRAFTMPDMHTLCEDMNQAVSQFKEQYDLCIDVLENVGIHIDDYEVAIRFTRDFYESNKELVVNMAKTVNKPVLVEMWDTRFFYFVLKFEFNFVDALAKASALSTVQIDVENAERYDISYVNADGKLERPIVLHCSPSGAIERCIYALLEKAAMETEEGKVPMLPVWLSPTQVRIVPISEKHLAFAEEVSKKLDCRVDIDDRDLSIGKKVREAGREWVPYVVVIGDKEMEEGTINVTVRAESEQNKPSKVQITPEELNARIRGEIAGKPYRKLPLAKYLSARPKFF.

The segment at 1–152 (MQLLLIHSDY…AKAAVKPEAA (152 aa)) is editing domain. Residues 215–514 (PHVELMRRLE…TEEGKVPMLP (300 aa)) form a catalytic region. C307, H359, and H483 together coordinate Zn(2+).

It belongs to the class-II aminoacyl-tRNA synthetase family. As to quaternary structure, homodimer. Zn(2+) serves as cofactor.

It localises to the cytoplasm. The catalysed reaction is tRNA(Thr) + L-threonine + ATP = L-threonyl-tRNA(Thr) + AMP + diphosphate + H(+). In terms of biological role, catalyzes the attachment of threonine to tRNA(Thr) in a two-step reaction: L-threonine is first activated by ATP to form Thr-AMP and then transferred to the acceptor end of tRNA(Thr). Also edits incorrectly charged L-seryl-tRNA(Thr). This chain is Threonine--tRNA ligase, found in Methanosarcina acetivorans (strain ATCC 35395 / DSM 2834 / JCM 12185 / C2A).